The sequence spans 74 residues: Small ribosomal subunit protein bS18 (74 aa).

This sequence belongs to the bacterial ribosomal protein bS18 family. As to quaternary structure, part of the 30S ribosomal subunit. Forms a tight heterodimer with protein bS6.

In terms of biological role, binds as a heterodimer with protein bS6 to the central domain of the 16S rRNA, where it helps stabilize the platform of the 30S subunit. This chain is Small ribosomal subunit protein bS18, found in Sphingopyxis alaskensis (strain DSM 13593 / LMG 18877 / RB2256) (Sphingomonas alaskensis).